A 319-amino-acid polypeptide reads, in one-letter code: Aspartate carbamoyltransferase catalytic subunit (319 aa).

2 residues coordinate carbamoyl phosphate: Arg-54 and Thr-55. Lys-82 contributes to the L-aspartate binding site. Carbamoyl phosphate is bound by residues Arg-104, His-134, and Gln-137. L-aspartate is bound by residues Arg-171 and Arg-227. Positions 271 and 272 each coordinate carbamoyl phosphate.

It belongs to the aspartate/ornithine carbamoyltransferase superfamily. ATCase family. As to quaternary structure, heterododecamer (2C3:3R2) of six catalytic PyrB chains organized as two trimers (C3), and six regulatory PyrI chains organized as three dimers (R2).

It catalyses the reaction carbamoyl phosphate + L-aspartate = N-carbamoyl-L-aspartate + phosphate + H(+). It participates in pyrimidine metabolism; UMP biosynthesis via de novo pathway; (S)-dihydroorotate from bicarbonate: step 2/3. Its function is as follows. Catalyzes the condensation of carbamoyl phosphate and aspartate to form carbamoyl aspartate and inorganic phosphate, the committed step in the de novo pyrimidine nucleotide biosynthesis pathway. The chain is Aspartate carbamoyltransferase catalytic subunit from Kineococcus radiotolerans (strain ATCC BAA-149 / DSM 14245 / SRS30216).